A 473-amino-acid polypeptide reads, in one-letter code: Ribulose bisphosphate carboxylase large chain (473 aa).

Substrate-binding residues include N116 and T166. The active-site Proton acceptor is the K168. Substrate is bound at residue K170. Mg(2+) contacts are provided by K194, D196, and E197. N6-carboxylysine is present on K194. H287 (proton acceptor) is an active-site residue. Residues R288, H320, and S372 each coordinate substrate.

It belongs to the RuBisCO large chain family. Type I subfamily. Heterohexadecamer of 8 large chains and 8 small chains. It depends on Mg(2+) as a cofactor.

It catalyses the reaction 2 (2R)-3-phosphoglycerate + 2 H(+) = D-ribulose 1,5-bisphosphate + CO2 + H2O. It carries out the reaction D-ribulose 1,5-bisphosphate + O2 = 2-phosphoglycolate + (2R)-3-phosphoglycerate + 2 H(+). Its function is as follows. RuBisCO catalyzes two reactions: the carboxylation of D-ribulose 1,5-bisphosphate, the primary event in carbon dioxide fixation, as well as the oxidative fragmentation of the pentose substrate. Both reactions occur simultaneously and in competition at the same active site. The chain is Ribulose bisphosphate carboxylase large chain from Alkalilimnicola ehrlichii (strain ATCC BAA-1101 / DSM 17681 / MLHE-1).